We begin with the raw amino-acid sequence, 476 residues long: Glycogen synthase (476 aa).

Lys-15 provides a ligand contact to ADP-alpha-D-glucose.

Belongs to the glycosyltransferase 1 family. Bacterial/plant glycogen synthase subfamily.

The catalysed reaction is [(1-&gt;4)-alpha-D-glucosyl](n) + ADP-alpha-D-glucose = [(1-&gt;4)-alpha-D-glucosyl](n+1) + ADP + H(+). Its pathway is glycan biosynthesis; glycogen biosynthesis. Functionally, synthesizes alpha-1,4-glucan chains using ADP-glucose. The polypeptide is Glycogen synthase (Yersinia pseudotuberculosis serotype O:1b (strain IP 31758)).